Here is a 583-residue protein sequence, read N- to C-terminus: Dynein axonemal assembly factor 3 (583 aa).

The tract at residues 455–534 is disordered; that stretch reads RGGGDSAVES…RADQIPPLEA (80 aa).

It belongs to the DNAAF3 family.

It is found in the cytoplasm. It localises to the dynein axonemal particle. In terms of biological role, required for the assembly of axonemal inner and outer dynein arms. Involved in preassembly of dyneins into complexes before their transport into cilia. The protein is Dynein axonemal assembly factor 3 (Dnaaf3) of Rattus norvegicus (Rat).